The following is a 399-amino-acid chain: Methylthioribose kinase (399 aa).

ATP is bound by residues Asn-40, Lys-57, and 111 to 113; that span reads EDL. Asp-229 is a substrate binding site. 246–248 contacts ATP; it reads DAE. Substrate is bound at residue Arg-344.

The protein belongs to the methylthioribose kinase family. Homodimer.

The enzyme catalyses 5-(methylsulfanyl)-D-ribose + ATP = 5-(methylsulfanyl)-alpha-D-ribose 1-phosphate + ADP + H(+). The protein operates within amino-acid biosynthesis; L-methionine biosynthesis via salvage pathway; S-methyl-5-thio-alpha-D-ribose 1-phosphate from S-methyl-5'-thioadenosine (hydrolase route): step 2/2. Functionally, catalyzes the phosphorylation of methylthioribose into methylthioribose-1-phosphate. The sequence is that of Methylthioribose kinase from Erwinia tasmaniensis (strain DSM 17950 / CFBP 7177 / CIP 109463 / NCPPB 4357 / Et1/99).